A 445-amino-acid polypeptide reads, in one-letter code: FAS-associated factor 2-B (445 aa).

Residues 12-48 form the UBA domain; sequence DQTEKLLQFQDLTGIESIDQCRQTLQQHNWNIETAVQ. Positions 275–353 form a coiled coil; sequence SERLEREERN…ERKSECLPAE (79 aa). The tract at residues 302–355 is disordered; that stretch reads RADQEKERKKKEKQDQKRREEEEAQRKQMLEERKKRNLEEEKERKSECLPAEPV. Basic and acidic residues predominate over residues 303–348; sequence ADQEKERKKKEKQDQKRREEEEAQRKQMLEERKKRNLEEEKERKSE. The UBX domain maps to 357–439; that stretch reads DHPDNVKIIF…GLSQSQLLFV (83 aa).

The protein localises to the cytoplasm. Its subcellular location is the lipid droplet. The protein resides in the endoplasmic reticulum. Plays an important role in endoplasmic reticulum-associated degradation (ERAD) that mediates ubiquitin-dependent degradation of misfolded endoplasmic reticulum proteins. Involved in inhibition of lipid droplet degradation. Involved in stress granule disassembly. The chain is FAS-associated factor 2-B (faf2-b) from Xenopus laevis (African clawed frog).